A 195-amino-acid polypeptide reads, in one-letter code: NADH-quinone oxidoreductase subunit I (195 aa).

4Fe-4S ferredoxin-type domains lie at Leu44–Ala74 and Gln90–Glu119. [4Fe-4S] cluster is bound by residues Cys54, Cys57, Cys60, Cys64, Cys99, Cys102, Cys105, and Cys109. The interval Met145 to Lys195 is disordered. Over residues Ala168–Glu181 the composition is skewed to low complexity. Over residues Ala184–Lys195 the composition is skewed to basic and acidic residues.

Belongs to the complex I 23 kDa subunit family. As to quaternary structure, NDH-1 is composed of 14 different subunits. Subunits NuoA, H, J, K, L, M, N constitute the membrane sector of the complex. It depends on [4Fe-4S] cluster as a cofactor.

The protein localises to the cell membrane. It carries out the reaction a quinone + NADH + 5 H(+)(in) = a quinol + NAD(+) + 4 H(+)(out). Functionally, NDH-1 shuttles electrons from NADH, via FMN and iron-sulfur (Fe-S) centers, to quinones in the respiratory chain. The immediate electron acceptor for the enzyme in this species is believed to be ubiquinone. Couples the redox reaction to proton translocation (for every two electrons transferred, four hydrogen ions are translocated across the cytoplasmic membrane), and thus conserves the redox energy in a proton gradient. The polypeptide is NADH-quinone oxidoreductase subunit I (Rhodococcus erythropolis (strain PR4 / NBRC 100887)).